The following is a 326-amino-acid chain: MEFTTIVVILLVIACIVVLFFIGSSISLWVQSLVSGARVGLLNIVFMRFRKVPPKLIVTSKIMAVKSGLEISTDDFESHYLAGGDVSRVVKALIAADKANIDLPFNRAAAIDLAGRNVLEAVQMSVNPKVIETPLIAAMAKDGIQLKAISRVTVRANIDRLVGGAGEETILARVGEGIVTTIGSANSHKMVLENPDLISKTVLSKGLDSGTAYEILSIDIADVDVGKNIGAELETDRAEADKKIAQAKAEERRAMAYAMEQEMKARVQEMRAKVVEAEAQVPLAMAEAFRQGNLGIMDYYRMKNIVSDTDMRQSIATPEKDDPDQP.

Residues 3–23 form a helical membrane-spanning segment; it reads FTTIVVILLVIACIVVLFFIG.

The protein belongs to the flotillin-like FloA family. Homooligomerizes.

Its subcellular location is the cell membrane. The protein resides in the membrane raft. Functionally, found in functional membrane microdomains (FMM) that may be equivalent to eukaryotic membrane rafts. FMMs are highly dynamic and increase in number as cells age. Flotillins are thought to be important factors in membrane fluidity. The chain is Flotillin-like protein FloA from Desulforapulum autotrophicum (strain ATCC 43914 / DSM 3382 / VKM B-1955 / HRM2) (Desulfobacterium autotrophicum).